Here is a 109-residue protein sequence, read N- to C-terminus: SRA stem-loop-interacting RNA-binding protein, mitochondrial (109 aa).

Serine 15 is modified (phosphoserine). An RRM domain is found at 19–103 (PVAFVRRIPW…RRPKLPQTSD (85 aa)). Threonine 101 carries the post-translational modification Phosphothreonine. Phosphoserine is present on serine 102.

The protein resides in the mitochondrion. Its subcellular location is the nucleus. In terms of biological role, RNA-binding protein that acts as a nuclear receptor corepressor. Probably acts by binding the SRA RNA, and repressing the SRA-mediated nuclear receptor coactivation. Binds the STR7 loop of SRA RNA. Also able to repress glucocorticoid (GR), androgen (AR), thyroid (TR) and VDR-mediated transactivation. This is SRA stem-loop-interacting RNA-binding protein, mitochondrial (SLIRP) from Pongo abelii (Sumatran orangutan).